Reading from the N-terminus, the 542-residue chain is Formate--tetrahydrofolate ligase (542 aa).

53–60 serves as a coordination point for ATP; the sequence is TPAGEGKT.

Belongs to the formate--tetrahydrofolate ligase family.

The enzyme catalyses (6S)-5,6,7,8-tetrahydrofolate + formate + ATP = (6R)-10-formyltetrahydrofolate + ADP + phosphate. It functions in the pathway one-carbon metabolism; tetrahydrofolate interconversion. This Thermotoga maritima (strain ATCC 43589 / DSM 3109 / JCM 10099 / NBRC 100826 / MSB8) protein is Formate--tetrahydrofolate ligase.